The chain runs to 201 residues: Holliday junction branch migration complex subunit RuvA (201 aa).

Residues 1–63 are domain I; sequence MIASVRGEVL…EDSMTLYGFA (63 aa). The segment at 64 to 142 is domain II; that stretch reads DTEARDLFGL…LVPVQAGPPG (79 aa). A flexible linker region spans residues 143–153; that stretch reads STPAVAATPVR. The tract at residues 153–201 is domain III; sequence REQVVEALTGLGFPLKQAEQALDTVLAEQPAADTSTALRAALSLLGKNR.

Belongs to the RuvA family. Homotetramer. Forms an RuvA(8)-RuvB(12)-Holliday junction (HJ) complex. HJ DNA is sandwiched between 2 RuvA tetramers; dsDNA enters through RuvA and exits via RuvB. An RuvB hexamer assembles on each DNA strand where it exits the tetramer. Each RuvB hexamer is contacted by two RuvA subunits (via domain III) on 2 adjacent RuvB subunits; this complex drives branch migration. In the full resolvosome a probable DNA-RuvA(4)-RuvB(12)-RuvC(2) complex forms which resolves the HJ.

It is found in the cytoplasm. The RuvA-RuvB-RuvC complex processes Holliday junction (HJ) DNA during genetic recombination and DNA repair, while the RuvA-RuvB complex plays an important role in the rescue of blocked DNA replication forks via replication fork reversal (RFR). RuvA specifically binds to HJ cruciform DNA, conferring on it an open structure. The RuvB hexamer acts as an ATP-dependent pump, pulling dsDNA into and through the RuvAB complex. HJ branch migration allows RuvC to scan DNA until it finds its consensus sequence, where it cleaves and resolves the cruciform DNA. This is Holliday junction branch migration complex subunit RuvA from Nocardia farcinica (strain IFM 10152).